The primary structure comprises 219 residues: Orotate phosphoribosyltransferase (219 aa).

Residue Lys26 coordinates 5-phospho-alpha-D-ribose 1-diphosphate. Residue 34–35 coordinates orotate; the sequence is FF. 5-phospho-alpha-D-ribose 1-diphosphate contacts are provided by residues 72 to 73, Arg98, Lys99, Lys102, His104, and 124 to 132; these read YK and DDVITAGTA. Orotate contacts are provided by Thr128 and Arg156.

It belongs to the purine/pyrimidine phosphoribosyltransferase family. PyrE subfamily. As to quaternary structure, homodimer. The cofactor is Mg(2+).

It carries out the reaction orotidine 5'-phosphate + diphosphate = orotate + 5-phospho-alpha-D-ribose 1-diphosphate. It participates in pyrimidine metabolism; UMP biosynthesis via de novo pathway; UMP from orotate: step 1/2. Functionally, catalyzes the transfer of a ribosyl phosphate group from 5-phosphoribose 1-diphosphate to orotate, leading to the formation of orotidine monophosphate (OMP). In Stenotrophomonas maltophilia (strain K279a), this protein is Orotate phosphoribosyltransferase.